The chain runs to 299 residues: METKTAKILDGKTLAEKIQKELTAQIIDAQAKIGRPPGLAVLMVGDNPASAAYVRNKEKSCAKVGIASFGKHFPQETTQTELEDVIAALNQDEQVDGILVQLPLPEHLDAVKLLHQIEPDKDADGLHPVNLGRLVRGEKGLRSCTPAGVMRLLAEYEISLRGKQAVVVGRSILVGKPMALMLLEADATVTIAHSRSQDLKSITQNADILIAAAGLPGLITADMVKPGAVVVDVGINRVSDAHGKSRLVGDINFASIAGVAEYITPVPGGIGPMTVALLLQNTVTSYLQTAKESGALDVK.

Residues 169-171, serine 194, and isoleucine 235 contribute to the NADP(+) site; that span reads GRS.

The protein belongs to the tetrahydrofolate dehydrogenase/cyclohydrolase family. In terms of assembly, homodimer.

It catalyses the reaction (6R)-5,10-methylene-5,6,7,8-tetrahydrofolate + NADP(+) = (6R)-5,10-methenyltetrahydrofolate + NADPH. The catalysed reaction is (6R)-5,10-methenyltetrahydrofolate + H2O = (6R)-10-formyltetrahydrofolate + H(+). The protein operates within one-carbon metabolism; tetrahydrofolate interconversion. Its function is as follows. Catalyzes the oxidation of 5,10-methylenetetrahydrofolate to 5,10-methenyltetrahydrofolate and then the hydrolysis of 5,10-methenyltetrahydrofolate to 10-formyltetrahydrofolate. This Nostoc sp. (strain PCC 7120 / SAG 25.82 / UTEX 2576) protein is Bifunctional protein FolD.